The sequence spans 360 residues: Peptide chain release factor 1 (360 aa).

Q237 is subject to N5-methylglutamine.

The protein belongs to the prokaryotic/mitochondrial release factor family. Methylated by PrmC. Methylation increases the termination efficiency of RF1.

The protein localises to the cytoplasm. In terms of biological role, peptide chain release factor 1 directs the termination of translation in response to the peptide chain termination codons UAG and UAA. This chain is Peptide chain release factor 1, found in Pseudomonas aeruginosa (strain LESB58).